The following is a 245-amino-acid chain: MANDTHTDDLDELLDSALDDFKDLNLTQRNGGVKKEEGDKKETESLPSGVQGLGMGLPDMRSKKKGKKKIAKEDHVTEALDKLREQTRETVKGLESLSSKQQPTGSDDAMVEDWIKQFENLTGSNDLESIVDTMMQQLLSKDILHEPMKEIGARYPKWLEEHESSLNKEEFDRYSRQYELIKELNLVYENEPNNSTKIMEIMQKMQECGQPPSDIVQEMDPGFDFASLGQMSPDMLESSPNCCVM.

The disordered stretch occupies residues 17–106 (ALDDFKDLNL…LSSKQQPTGS (90 aa)). Basic and acidic residues-rich tracts occupy residues 33–44 (VKKEEGDKKETE) and 71–92 (AKED…ETVK). Over residues 96–105 (SLSSKQQPTG) the composition is skewed to polar residues. The residue at position 242 (cysteine 242) is a Cysteine methyl ester. A lipid anchor (S-farnesyl cysteine) is attached at cysteine 242. Residues 243–245 (CVM) constitute a propeptide, removed in mature form.

The protein belongs to the peroxin-19 family. As to quaternary structure, dimer. Interacts with PEX10 (via C-terminus). Post-translationally, may be farnesylated. In terms of tissue distribution, expressed in roots, leaves, flowers, siliques and stems. Highest expression in roots and leaves.

The protein resides in the cytoplasm. Its subcellular location is the peroxisome membrane. Functionally, contributes to morphology determination of peroxisomes, but not to import of peroxisomal matrix proteins. Required for proper post-translational import and stabilization of peroxisomal membrane proteins (PMPs). Acts as a cytosolic import receptor for PMPs and delivers them to the docking factor PEX3 at the peroxisomal membrane for subsequent insertion into the membrane. Acts as a chaperone in stabilizing or maintaining PMPs in the lipid bilayer. The chain is Peroxisome biogenesis protein 19-2 (PEX19-2) from Arabidopsis thaliana (Mouse-ear cress).